The chain runs to 98 residues: Integration host factor subunit alpha (98 aa).

It belongs to the bacterial histone-like protein family. As to quaternary structure, heterodimer of an alpha and a beta chain.

Functionally, this protein is one of the two subunits of integration host factor, a specific DNA-binding protein that functions in genetic recombination as well as in transcriptional and translational control. The polypeptide is Integration host factor subunit alpha (Glaesserella parasuis serovar 5 (strain SH0165) (Haemophilus parasuis)).